The chain runs to 145 residues: Large ribosomal subunit protein uL14m (145 aa).

A mitochondrion-targeting transit peptide spans 1–30 (MAALTGLWGSFAHVSRAFSQRCFSTSGSLS).

This sequence belongs to the universal ribosomal protein uL14 family. Component of the mitochondrial ribosome large subunit (39S) which comprises a 16S rRNA and about 50 distinct proteins. Interacts with MALSU1.

It localises to the mitochondrion. Functionally, may form part of 2 intersubunit bridges in the assembled ribosome. Upon binding to MALSU1, intersubunit bridge formation is blocked, preventing ribosome formation and repressing translation. The chain is Large ribosomal subunit protein uL14m (Mrpl14) from Mus musculus (Mouse).